The chain runs to 249 residues: MKFDILTLFPAMFEGPLTESILKRASDKGLIEVALHNIRDWAFDKHATADDAPYGGGAGMVMKVEPIAGAIEAVKAKNPNSKVILTTPCGRPFNHQFAEELSREEGVVIICGRYEGVDERVRTLFVDDEISLGDFVLTGGEIAAMVIVDAVSRLVPGVLGSDESAQYDSFADGLLEYPQYTRPPEFRGEKVPDILLSGNHAEIAKWRRKEQMRRTLASRPELLDGIEWSKSDKKLFVEVEKANQEKVAR.

S-adenosyl-L-methionine contacts are provided by residues G112 and 132–137; that span reads LGDFVL.

The protein belongs to the RNA methyltransferase TrmD family. In terms of assembly, homodimer.

The protein resides in the cytoplasm. It carries out the reaction guanosine(37) in tRNA + S-adenosyl-L-methionine = N(1)-methylguanosine(37) in tRNA + S-adenosyl-L-homocysteine + H(+). Functionally, specifically methylates guanosine-37 in various tRNAs. This chain is tRNA (guanine-N(1)-)-methyltransferase, found in Citrifermentans bemidjiense (strain ATCC BAA-1014 / DSM 16622 / JCM 12645 / Bem) (Geobacter bemidjiensis).